A 619-amino-acid chain; its full sequence is tRNA (guanine(37)-N(1))-methyltransferase 2 (619 aa).

The transit peptide at 1–10 (MVSKLSLFRA) directs the protein to the mitochondrion. S-adenosyl-L-methionine contacts are provided by residues Arg434, 472-473 (DL), 500-501 (DG), and Asn523.

It belongs to the class I-like SAM-binding methyltransferase superfamily. TRM5/TYW2 family. In terms of assembly, monomer.

It localises to the mitochondrion matrix. It is found in the nucleus. The protein localises to the cytoplasm. The catalysed reaction is guanosine(37) in tRNA + S-adenosyl-L-methionine = N(1)-methylguanosine(37) in tRNA + S-adenosyl-L-homocysteine + H(+). Specifically methylates the N1 position of guanosine-37 in various cytoplasmic and mitochondrial tRNAs. Methylation is not dependent on the nature of the nucleoside 5' of the target nucleoside. This is the first step in the biosynthesis of wybutosine (yW), a modified base adjacent to the anticodon of tRNAs and required for accurate decoding. In Arabidopsis thaliana (Mouse-ear cress), this protein is tRNA (guanine(37)-N(1))-methyltransferase 2.